A 239-amino-acid polypeptide reads, in one-letter code: Tetraspanin-9 (239 aa).

Over 1–13 (MARGCLCCLKYMM) the chain is Cytoplasmic. Residues 14-34 (FLFNLIFWLCGCGLLGVGIWL) traverse the membrane as a helical segment. At 35-55 (SVSQGNFATFSPSFPSLSAAN) the chain is on the extracellular side. The helical transmembrane segment at 56–76 (LVIVIGTVVMVTGFLGCLGAI) threads the bilayer. The Cytoplasmic portion of the chain corresponds to 77–85 (KENKCLLLS). A helical membrane pass occupies residues 86–106 (FFIILLIILLTELILLILFFV). Topologically, residues 107 to 203 (YMDKVNENAK…VKMWFDDNKH (97 aa)) are extracellular. An N-linked (GlcNAc...) asparagine glycan is attached at asparagine 180. Residues 204-224 (VLGTIGMCILIIQILGMAFSM) traverse the membrane as a helical segment. Residues 225–239 (TLFQQIHRTGKKYDA) lie on the Cytoplasmic side of the membrane.

It belongs to the tetraspanin (TM4SF) family.

The protein localises to the membrane. The chain is Tetraspanin-9 (tspan9) from Xenopus laevis (African clawed frog).